The sequence spans 242 residues: Venom nerve growth factor (242 aa).

A signal peptide spans Met1 to Ala18. The propeptide occupies Ala19–Arg125. A compositionally biased stretch (basic and acidic residues) spans Gly47–Asp66. A disordered region spans residues Gly47–Gly70. 3 disulfides stabilise this stretch: Cys139/Cys203, Cys181/Cys231, and Cys191/Cys233. Residue Asn166 is glycosylated (N-linked (GlcNAc...) asparagine).

The protein belongs to the NGF-beta family. In terms of assembly, homodimer; non-covalently linked. Expressed by the venom gland.

Its subcellular location is the secreted. Its function is as follows. Nerve growth factor is important for the development and maintenance of the sympathetic and sensory nervous systems. It stimulates division and differentiation of sympathetic and embryonic sensory neurons as well as basal forebrain cholinergic neurons in the brain. Its relevance in the snake venom is not clear. However, it has been shown to inhibit metalloproteinase-dependent proteolysis of platelet glycoprotein Ib alpha, suggesting a metalloproteinase inhibition to prevent metalloprotease autodigestion and/or protection against prey proteases. Binds a lipid between the two protein chains in the homodimer. The lipid-bound form promotes histamine relase from mouse mast cells, contrary to the lipid-free form. The sequence is that of Venom nerve growth factor from Drysdalia coronoides (White-lipped snake).